A 406-amino-acid polypeptide reads, in one-letter code: Dual-specificity RNA methyltransferase RlmN (406 aa).

Glu119 acts as the Proton acceptor in catalysis. Positions 125 to 370 (DKGRGTLCVS…AMVRRTRGDD (246 aa)) constitute a Radical SAM core domain. Cys132 and Cys375 are joined by a disulfide. Cys139, Cys143, and Cys146 together coordinate [4Fe-4S] cluster. Residues 192 to 193 (GE), Ser224, 246 to 248 (SLH), and Asn332 each bind S-adenosyl-L-methionine. Cys375 (S-methylcysteine intermediate) is an active-site residue.

Belongs to the radical SAM superfamily. RlmN family. [4Fe-4S] cluster is required as a cofactor.

It is found in the cytoplasm. It carries out the reaction adenosine(2503) in 23S rRNA + 2 reduced [2Fe-2S]-[ferredoxin] + 2 S-adenosyl-L-methionine = 2-methyladenosine(2503) in 23S rRNA + 5'-deoxyadenosine + L-methionine + 2 oxidized [2Fe-2S]-[ferredoxin] + S-adenosyl-L-homocysteine. The enzyme catalyses adenosine(37) in tRNA + 2 reduced [2Fe-2S]-[ferredoxin] + 2 S-adenosyl-L-methionine = 2-methyladenosine(37) in tRNA + 5'-deoxyadenosine + L-methionine + 2 oxidized [2Fe-2S]-[ferredoxin] + S-adenosyl-L-homocysteine. In terms of biological role, specifically methylates position 2 of adenine 2503 in 23S rRNA and position 2 of adenine 37 in tRNAs. m2A2503 modification seems to play a crucial role in the proofreading step occurring at the peptidyl transferase center and thus would serve to optimize ribosomal fidelity. This chain is Dual-specificity RNA methyltransferase RlmN, found in Xylella fastidiosa (strain M12).